The following is a 393-amino-acid chain: S-adenosylmethionine synthase (393 aa).

His-17 contacts ATP. Asp-19 provides a ligand contact to Mg(2+). Glu-45 is a binding site for K(+). L-methionine-binding residues include Glu-58 and Gln-104. The interval Gln-104–Glu-114 is flexible loop. ATP-binding positions include Asp-171–Lys-173, Asp-245, Arg-251–Lys-252, Ala-268, and Lys-272. Asp-245 is a binding site for L-methionine. Lys-276 is a binding site for L-methionine.

The protein belongs to the AdoMet synthase family. Homotetramer; dimer of dimers. It depends on Mg(2+) as a cofactor. K(+) serves as cofactor.

Its subcellular location is the cytoplasm. It carries out the reaction L-methionine + ATP + H2O = S-adenosyl-L-methionine + phosphate + diphosphate. It participates in amino-acid biosynthesis; S-adenosyl-L-methionine biosynthesis; S-adenosyl-L-methionine from L-methionine: step 1/1. Its function is as follows. Catalyzes the formation of S-adenosylmethionine (AdoMet) from methionine and ATP. The overall synthetic reaction is composed of two sequential steps, AdoMet formation and the subsequent tripolyphosphate hydrolysis which occurs prior to release of AdoMet from the enzyme. The chain is S-adenosylmethionine synthase from Hyphomonas neptunium (strain ATCC 15444).